The following is a 405-amino-acid chain: MAGVLGMILAGGEGSRLRPLTESRTKPAVPFGGSYRLIDFALNNFVNADLMRIYVLTQFKSQSLFQHMKKGWNVNGITDRFIDPVPAQMRTGKRWYEGTADAIYQNISFIESTDPEHVCIFGSDHIYKMDIRQMLDFHKKKKAALTVSALRMPAKDASGFGVIEVDEHGKMIGFEEKPSNPKCIPGQPGIALVSMGNYIFEAESLCKELIHDAALEDSSHDFGKDIIPKMFPEGNVYVYDFSTNHITGEKKEVYWRDVGTIESYWEAHMDLLKKDAPFSLYNRKWPLHTYYPPLPPATFSDSDNGRVQIIDSLVCGGSYIRGSRIEKSVLGFRSNIASACDISESILLGNVKVGKGCVLRRVIVDKGADIAPGTEIGVNLQEDKKKYHVSDEGIVVIPKGERVGY.

Residues tyrosine 96, glycine 161, glutamate 176–lysine 177, and serine 194 each bind alpha-D-glucose 1-phosphate.

Belongs to the bacterial/plant glucose-1-phosphate adenylyltransferase family. As to quaternary structure, homotetramer.

The enzyme catalyses alpha-D-glucose 1-phosphate + ATP + H(+) = ADP-alpha-D-glucose + diphosphate. The protein operates within glycan biosynthesis; glycogen biosynthesis. Involved in the biosynthesis of ADP-glucose, a building block required for the elongation reactions to produce glycogen. Catalyzes the reaction between ATP and alpha-D-glucose 1-phosphate (G1P) to produce pyrophosphate and ADP-Glc. The sequence is that of Glucose-1-phosphate adenylyltransferase from Aliivibrio fischeri (strain MJ11) (Vibrio fischeri).